A 502-amino-acid polypeptide reads, in one-letter code: Maturase K (502 aa).

The protein belongs to the intron maturase 2 family. MatK subfamily.

It is found in the plastid. It localises to the chloroplast. Usually encoded in the trnK tRNA gene intron. Probably assists in splicing its own and other chloroplast group II introns. The sequence is that of Maturase K from Brassica campestris (Field mustard).